A 214-amino-acid polypeptide reads, in one-letter code: Adenylate kinase (214 aa).

Glycine 10–threonine 15 is a binding site for ATP. Positions serine 30–valine 59 are NMP. AMP-binding positions include threonine 31, arginine 36, glutamine 57 to valine 59, glycine 85 to arginine 88, and glutamine 92. Positions glycine 122 to aspartate 159 are LID. ATP-binding positions include arginine 123 and threonine 132–tyrosine 133. AMP-binding residues include arginine 156 and arginine 167. ATP is bound at residue glutamine 200.

Belongs to the adenylate kinase family. Monomer.

Its subcellular location is the cytoplasm. The catalysed reaction is AMP + ATP = 2 ADP. Its pathway is purine metabolism; AMP biosynthesis via salvage pathway; AMP from ADP: step 1/1. In terms of biological role, catalyzes the reversible transfer of the terminal phosphate group between ATP and AMP. Plays an important role in cellular energy homeostasis and in adenine nucleotide metabolism. In Histophilus somni (strain 129Pt) (Haemophilus somnus), this protein is Adenylate kinase.